Reading from the N-terminus, the 851-residue chain is Glycogen phosphorylase, liver form (851 aa).

At alanine 2 the chain carries N-acetylalanine. Position 15 is a phosphoserine; by PHK; in form phosphorylase a (serine 15). AMP-binding positions include 43-45, tyrosine 76, and arginine 310; that span reads DRN. At lysine 364 the chain carries N6-succinyllysine. Lysine 470 is modified (N6-acetyllysine). A phosphoserine mark is found at serine 524, serine 561, and serine 639. An N6-(pyridoxal phosphate)lysine modification is found at lysine 681. At lysine 796 the chain carries N6-acetyllysine.

Belongs to the glycogen phosphorylase family. As to quaternary structure, homodimer; enzymatically active. Interacts with PPP1R3B; recruits the phosphatase PP1 which dephosphorylates and inactivates PYGL/glycogen phosphorylase. Pyridoxal 5'-phosphate is required as a cofactor. Acetylation, which is up-regulated by glucose and insulin and down-regulated by glucagon, inhibits the glycogen phosphorylase activity by promoting PPP1R3B-mediated recruitment of phosphatase PP1 and Ser-15 dephosphorylation. Post-translationally, phosphorylation at Ser-15 converts inactive phosphorylase b into active phosphorylase a. Dephosphorylation of Ser-15 by phosphatase PP1 inactivates the enzyme.

Its subcellular location is the cytoplasm. It is found in the cytosol. It catalyses the reaction [(1-&gt;4)-alpha-D-glucosyl](n) + phosphate = [(1-&gt;4)-alpha-D-glucosyl](n-1) + alpha-D-glucose 1-phosphate. With respect to regulation, allosterically regulated through the non-covalent binding of metabolites, being activated by AMP and inhibited by ATP, ADP, and glucose-6-phosphate. The activity is also controlled by post-translational modifications including phosphorylation and acetylation. Allosteric enzyme that catalyzes the rate-limiting step in glycogen catabolism, the phosphorolytic cleavage of glycogen to produce glucose-1-phosphate, and plays a central role in maintaining cellular and organismal glucose homeostasis. This Bos taurus (Bovine) protein is Glycogen phosphorylase, liver form.